A 1325-amino-acid chain; its full sequence is RIMS-binding protein 2 (1325 aa).

The interval 153–181 is disordered; the sequence is TFLSKSRSDTPRCRFDSDMDNDQNSNTSK. Residues 158-169 are compositionally biased toward basic and acidic residues; that stretch reads SRSDTPRCRFDS. Residues 186–253 enclose the SH3 1 domain; it reads GKVHLCIARY…PSNFVDFVQD (68 aa). 3 consecutive Fibronectin type-III domains span residues 315–408, 411–493, and 507–608; these read VPYP…GKDV, APSN…KKEA, and PPQD…VPPS. Disordered stretches follow at residues 601-778, 988-1010, and 1040-1090; these read SDLL…GSDL, DLGS…KKYE, and AAGP…SRPM. Residues 627-641 show a composition bias toward basic and acidic residues; the sequence is ETKEEHLGPHLKIDE. A compositionally biased stretch (polar residues) spans 664 to 676; sequence FPSSLQGRRSPSP. The span at 696–716 shows a compositional bias: basic and acidic residues; the sequence is MAREAAQRVAESNRMERRSVF. The segment covering 717–727 has biased composition (polar residues); it reads SERSNAAQYAN. Composition is skewed to basic and acidic residues over residues 763–774 and 996–1010; these read CHGEDYHTESSR and PRSE…KKYE. 2 consecutive SH3 domains span residues 1121–1189 and 1225–1292; these read ISTR…EIQA and VSTR…EVPD.

The protein belongs to the RIMBP family. As to quaternary structure, interacts with RIMS1, RIMS2, CACNA1D and CACNA1B, and potentially with other Ca(2+) channel alpha-1 isoforms. Brain, cochlea and retina.

The protein localises to the cell membrane. It localises to the synapse. Functionally, plays a role in the synaptic transmission as bifunctional linker that interacts simultaneously with RIMS1, RIMS2, CACNA1D and CACNA1B. This chain is RIMS-binding protein 2 (RIMBP2), found in Gallus gallus (Chicken).